The following is a 191-amino-acid chain: Adenylate kinase (191 aa).

Position 12 to 17 (12 to 17 (GSGKTT)) interacts with ATP. The tract at residues 34–63 (STGDLLRAESAKKTERGLLIEKFTSQGELV) is NMP. AMP is bound by residues Thr-35, Arg-40, 61–63 (ELV), 88–91 (GYPR), and Gln-95. The tract at residues 130–136 (GRSRGAD) is LID. An ATP-binding site is contributed by Arg-131. AMP is bound by residues Arg-133 and Arg-145. Arg-173 provides a ligand contact to ATP.

It belongs to the adenylate kinase family. As to quaternary structure, monomer.

The protein resides in the cytoplasm. The catalysed reaction is AMP + ATP = 2 ADP. Its pathway is purine metabolism; AMP biosynthesis via salvage pathway; AMP from ADP: step 1/1. Functionally, catalyzes the reversible transfer of the terminal phosphate group between ATP and AMP. Plays an important role in cellular energy homeostasis and in adenine nucleotide metabolism. In Helicobacter pylori (strain Shi470), this protein is Adenylate kinase.